Consider the following 445-residue polypeptide: FAS-associated factor 2-B (445 aa).

The region spanning 12 to 48 (DQTEKLLQFQDLTGIESIDQCRQTLQQHNWNIETAVQ) is the UBA domain. Positions 275–353 (SERLEREERN…ERKSECLPAE (79 aa)) form a coiled coil. A disordered region spans residues 302-355 (RADQEKERKKKEKQDQKRREEEEAQRKQMLEERKKRNLEEEKERKSECLPAEPV). The segment covering 303-348 (ADQEKERKKKEKQDQKRREEEEAQRKQMLEERKKRNLEEEKERKSE) has biased composition (basic and acidic residues). Residues 357–439 (DHPDNVKIIF…GLSQSQLLFV (83 aa)) form the UBX domain.

It is found in the cytoplasm. It localises to the lipid droplet. The protein resides in the endoplasmic reticulum. Functionally, plays an important role in endoplasmic reticulum-associated degradation (ERAD) that mediates ubiquitin-dependent degradation of misfolded endoplasmic reticulum proteins. Involved in inhibition of lipid droplet degradation. Involved in stress granule disassembly. The sequence is that of FAS-associated factor 2-B (faf2-b) from Xenopus laevis (African clawed frog).